A 249-amino-acid polypeptide reads, in one-letter code: EID1-like F-box protein 2 (249 aa).

Residues 16–68 (HCTKGHLSEEVLFLMVQHLNWNPNVIATLSCVCKWFDDLAKRLLWKEFCRARA) form the F-box domain.

In Arabidopsis thaliana (Mouse-ear cress), this protein is EID1-like F-box protein 2 (EDL2).